Consider the following 983-residue polypeptide: MDTHQSFNENQHPNFNSGNHGGINMNRFQRFSKPTISPIQQQQQPQPQQPSSIIQRQSIIMTQPQPQPQPQMIPIFREPNEWYKLIDMEMNKFNNESRPSPEYIKYLTQLFQQALDSLEHKNTPEFYLFLLNRATFQSKIGENEDAKGTLKYMKVLKMESFEVFVLLSEIESKSFRFSKARSIINRGIQKIPSRSKEFEGFLMVIDIQEDEFSRNGCIISNNNNISFNNGDVNNNSIIMNENDQPMVINLNPQQQQQQQQQPYEISSSSSLMSTPASSRHLSNRSSIVPTPNSSTKLSESIKTIGLRSVQPRRVIHKQTTTNFNTTTTTIPENSYDDDADQPMDHDGNNNNNFRIHSNNNNNSSANSSYNKSENDEDDQDEEDEEEEDEDEDDDEEDEEEYEDNNNNNNNNNNNNNNNNNNNNNNNNNNYFKYNRQQYILNNDSDTSTNPNSPASSNSSVNDIINSISITDDSKLDYENNVKLQQQQQQQQQQQQQQQQQQQQQQQQQYIQQQQQQQPKIHPQRFSLQNNTPTTTTTTTAATNVQNPSSSSSYISPPLSSQSSELQHQRRHSIQAQRANKPPVIPPPSKLHQNNLQQQQQQQQQQQQQQQQQQQQQLLLQQQALLQQQQQQQILLQQQQQQQQQQQQQQQQQKQQEQQLKKTNMQPPPPKQPQPQTQTQQQQKNINNSEIVDKEKSFEVAKSWSEVAMVNGKPYLRIEFIGKGGSGKVYKVLSGDLKIYALKYVCLSDPNEIEAQLNEIEMLKRLRKQVNIIQLIDYEVNMAKNYILLVLEFGEIDLSKLLQRLQTPNGTNVNFIRIYWQQMLQAVHTIHEEKIIHGDLKPANFVSVQGSLKLIDFGIAKAIQSDDTTNIVRESQIGTINYISPEALIDTSQGGPKQCMKLGRASDIWSLGCILYEMAFGYPPFKSFSNIISKYQAIINPHHKIEFPVHPNENLLKVLKLCLIRNPHERPTIPTLLNHDFLKI.

Residues 1–18 (MDTHQSFNENQHPNFNSG) show a composition bias toward polar residues. 5 disordered regions span residues 1-26 (MDTHQSFNENQHPNFNSGNHGGINMN), 252-430 (PQQQ…NNNY), 441-460 (NNDSDTSTNPNSPASSNSSV), 513-601 (QQQQ…QQQQ), and 654-691 (QQEQQLKKTNMQPPPPKQPQPQTQTQQQQKNINNSEIV). Positions 253 to 278 (QQQQQQQQQPYEISSSSSLMSTPASS) are enriched in low complexity. A compositionally biased stretch (polar residues) spans 279-301 (RHLSNRSSIVPTPNSSTKLSESI). Composition is skewed to low complexity over residues 319 to 329 (TTTNFNTTTTT) and 348 to 371 (NNNNNFRIHSNNNNNSSANSSYNK). Positions 374-403 (NDEDDQDEEDEEEEDEDEDDDEEDEEEYED) are enriched in acidic residues. Residues 380-430 (DEEDEEEEDEDEDDDEEDEEEYEDNNNNNNNNNNNNNNNNNNNNNNNNNNY) adopt a coiled-coil conformation. Residues 404–429 (NNNNNNNNNNNNNNNNNNNNNNNNNN) show a composition bias toward low complexity. The stretch at 474-517 (KLDYENNVKLQQQQQQQQQQQQQQQQQQQQQQQQQYIQQQQQQQ) forms a coiled coil. Positions 529–563 (NNTPTTTTTTTAATNVQNPSSSSSYISPPLSSQSS) are enriched in low complexity. Residues 588-665 (SKLHQNNLQQ…EQQLKKTNMQ (78 aa)) adopt a coiled-coil conformation. The segment covering 673–683 (QPQTQTQQQQK) has biased composition (low complexity). The region spanning 714–981 (YLRIEFIGKG…IPTLLNHDFL (268 aa)) is the Protein kinase domain. ATP contacts are provided by residues 720-728 (IGKGGSGKV) and Lys742. The active-site Proton acceptor is Asp838.

It belongs to the protein kinase superfamily. Ser/Thr protein kinase family.

It catalyses the reaction L-seryl-[protein] + ATP = O-phospho-L-seryl-[protein] + ADP + H(+). It carries out the reaction L-threonyl-[protein] + ATP = O-phospho-L-threonyl-[protein] + ADP + H(+). In Dictyostelium discoideum (Social amoeba), this protein is Probable serine/threonine-protein kinase mps1 (mps1).